The primary structure comprises 177 residues: Nucleoside triphosphate/diphosphate phosphatase (177 aa).

Arg-23 functions as the Proton donor in the catalytic mechanism. Positions 87, 103, 105, 107, 120, and 123 each coordinate Mg(2+).

Belongs to the Ntdp family. Mg(2+) is required as a cofactor.

It catalyses the reaction a ribonucleoside 5'-triphosphate + H2O = a ribonucleoside 5'-diphosphate + phosphate + H(+). The catalysed reaction is a ribonucleoside 5'-diphosphate + H2O = a ribonucleoside 5'-phosphate + phosphate + H(+). Functionally, has nucleoside phosphatase activity towards nucleoside triphosphates and nucleoside diphosphates. The polypeptide is Nucleoside triphosphate/diphosphate phosphatase (Streptococcus thermophilus (strain CNRZ 1066)).